The following is a 670-amino-acid chain: Probable plastid-lipid-associated protein 14, chloroplastic (670 aa).

The transit peptide at 1-52 directs the protein to the chloroplast; the sequence is MALCGVCSTPNLPNLQVFRSVRNSSIGYKRNHSLWQLRSSSFRAKSVIFHCS. A Protein kinase domain is found at 88–399; the sequence is FRILDRVSIG…CLDALKHPFL (312 aa).

This sequence belongs to the PAP/fibrillin family. In terms of processing, not autophosphorylated. Expressed in roots.

The protein localises to the plastid. Its subcellular location is the chloroplast. Directly regulated by DOF3.6/OBP3; unknown function. The polypeptide is Probable plastid-lipid-associated protein 14, chloroplastic (PAP14) (Arabidopsis thaliana (Mouse-ear cress)).